The sequence spans 528 residues: Na(+)/H(+) antiporter NhaB (528 aa).

10 helical membrane passes run 20 to 39 (WFKI…FYFN), 66 to 86 (PGGL…SQVL), 97 to 117 (LLLV…LFVF), 139 to 159 (AFLS…TVAV), 241 to 261 (IRMS…CFLV), 304 to 324 (AVIG…VGLI), 349 to 369 (EEAL…AVII), 390 to 410 (LVIF…VFVG), 448 to 468 (ATPN…APLI), and 476 to 496 (VWMA…AIQL).

It belongs to the NhaB Na(+)/H(+) (TC 2.A.34) antiporter family.

It localises to the cell inner membrane. It catalyses the reaction 2 Na(+)(in) + 3 H(+)(out) = 2 Na(+)(out) + 3 H(+)(in). Na(+)/H(+) antiporter that extrudes sodium in exchange for external protons. The protein is Na(+)/H(+) antiporter NhaB of Shewanella pealeana (strain ATCC 700345 / ANG-SQ1).